The primary structure comprises 86 residues: MKMAKSANEIGFITCLVVFLVLTGQSNGMSNGMPRTVPCIEGRILWNRTLPCSSILCGDHCVPHGYRAGTCDIVNDRAICKCSRCR.

The signal sequence occupies residues 1–28 (MKMAKSANEIGFITCLVVFLVLTGQSNG). Intrachain disulfides connect C39/C85, C52/C71, C57/C80, and C61/C82.

It belongs to the DEFL family.

Its subcellular location is the secreted. This chain is Putative defensin-like protein 189, found in Arabidopsis thaliana (Mouse-ear cress).